The following is a 263-amino-acid chain: 3'-5' ssDNA/RNA exonuclease TatD (263 aa).

A divalent metal cation is bound by residues E91, H127, and H152.

The protein belongs to the metallo-dependent hydrolases superfamily. TatD-type hydrolase family. TatD subfamily. Monomer. Requires Mg(2+) as cofactor.

The protein resides in the cytoplasm. In terms of biological role, 3'-5' exonuclease that prefers single-stranded DNA and RNA. May play a role in the H(2)O(2)-induced DNA damage repair. This chain is 3'-5' ssDNA/RNA exonuclease TatD, found in Cronobacter turicensis (strain DSM 18703 / CCUG 55852 / LMG 23827 / z3032).